Reading from the N-terminus, the 1012-residue chain is RNA-binding protein 26 (1012 aa).

K94 participates in a covalent cross-link: Glycyl lysine isopeptide (Lys-Gly) (interchain with G-Cter in SUMO2). Residues 98-127 adopt a coiled-coil conformation; sequence LQHQEKDIKKEELTKEEEREKKFSRRLNHS. K106 is covalently cross-linked (Glycyl lysine isopeptide (Lys-Gly) (interchain with G-Cter in SUMO1); alternate). Residue K106 forms a Glycyl lysine isopeptide (Lys-Gly) (interchain with G-Cter in SUMO2); alternate linkage. Residues 106-118 are compositionally biased toward basic and acidic residues; sequence KKEELTKEEEREK. Positions 106 to 236 are disordered; sequence KKEELTKEEE…PLENNYTPVS (131 aa). Position 127 is a phosphoserine (S127). Residues 134-168 show a composition bias toward basic and acidic residues; that stretch reads RYRDNRSRDERKKDDRSRKRDYDRNPPRRDSYRDR. Over residues 169 to 186 the composition is skewed to basic residues; sequence YNRRRGRSRSYSRSRSRS. 2 stretches are compositionally biased toward basic and acidic residues: residues 187-201 and 209-227; these read WSKE…DRSR and RSRE…RTDP. Residues 288–316 form a C3H1-type zinc finger; the sequence is PMPKKRCRDYDEKGFCMRGDMCPFDHGSD. Residues 334 to 388 are compositionally biased toward pro residues; sequence QPPVVEGPPPPGLPPPPPILTPPPVNLRPPVPPPGPLPPSLPPVTGPPPPLPPLQ. Disordered regions lie at residues 334–404 and 465–520; these read QPPV…SSVP and IGLT…NFNR. Residues 394 to 404 show a composition bias toward low complexity; it reads APPNSATSSVP. The residue at position 501 (S501) is a Phosphoserine. At K515 the chain carries N6-acetyllysine. At S523 the chain carries Phosphoserine. The region spanning 537 to 611 is the RRM 1 domain; the sequence is TKLELRKVPP…RFIKVYWHRE (75 aa). At S621 the chain carries Phosphoserine. Residues 647-667 form a disordered region; that stretch reads PVPSATTEPAEAQSATSELPQ. 2 coiled-coil regions span residues 724-800 and 828-852; these read DNNE…KSTS and KKMQ…EAAK. The disordered stretch occupies residues 858–889; it reads SGRGRGIHTRGRGTAHGRGRGRGRGRGVPGHA. The segment covering 862–882 has biased composition (basic residues); it reads RGIHTRGRGTAHGRGRGRGRG. Positions 896-965 constitute an RRM 2 domain; the sequence is RALEISAFTE…QDLKLAWNKP (70 aa). Residues 970–1012 are disordered; sequence SAVDTEEAEPDEEEFQEESLVDDSLLQDDDEEEEDNESRSWRR. Residues 973-1005 show a composition bias toward acidic residues; sequence DTEEAEPDEEEFQEESLVDDSLLQDDDEEEEDN.

As to expression, expressed in testis and ovary.

May be involved in the turnover of nuclear polyadenylated (pA+) RNA. The protein is RNA-binding protein 26 of Mus musculus (Mouse).